A 114-amino-acid chain; its full sequence is MAEITSAKAMARTVRVSPRKSRLVLDNIRGKNVADAIAILKFTPNKAAGIIEKVLNSAIANAENNFGLEKANLVVSEAFANEGPTMKRFRPRAKGSASPINKRTSHITVVVAEK.

Belongs to the universal ribosomal protein uL22 family. In terms of assembly, part of the 50S ribosomal subunit.

In terms of biological role, this protein binds specifically to 23S rRNA; its binding is stimulated by other ribosomal proteins, e.g. L4, L17, and L20. It is important during the early stages of 50S assembly. It makes multiple contacts with different domains of the 23S rRNA in the assembled 50S subunit and ribosome. The globular domain of the protein is located near the polypeptide exit tunnel on the outside of the subunit, while an extended beta-hairpin is found that lines the wall of the exit tunnel in the center of the 70S ribosome. In Streptococcus sanguinis (strain SK36), this protein is Large ribosomal subunit protein uL22.